The following is a 74-amino-acid chain: Translation initiation factor IF-1 (74 aa).

An S1-like domain is found at 1–72 (MAKQDAIEME…TKGRITYRLR (72 aa)).

It belongs to the IF-1 family. In terms of assembly, component of the 30S ribosomal translation pre-initiation complex which assembles on the 30S ribosome in the order IF-2 and IF-3, IF-1 and N-formylmethionyl-tRNA(fMet); mRNA recruitment can occur at any time during PIC assembly.

Its subcellular location is the cytoplasm. Functionally, one of the essential components for the initiation of protein synthesis. Stabilizes the binding of IF-2 and IF-3 on the 30S subunit to which N-formylmethionyl-tRNA(fMet) subsequently binds. Helps modulate mRNA selection, yielding the 30S pre-initiation complex (PIC). Upon addition of the 50S ribosomal subunit IF-1, IF-2 and IF-3 are released leaving the mature 70S translation initiation complex. This is Translation initiation factor IF-1 from Acaryochloris marina (strain MBIC 11017).